A 369-amino-acid polypeptide reads, in one-letter code: 3-isopropylmalate dehydrogenase (369 aa).

77–90 (GPKYDVLDFSVKPE) is an NAD(+) binding site. Arg-97, Arg-107, Arg-135, and Asp-226 together coordinate substrate. Mg(2+) contacts are provided by Asp-226, Asp-250, and Asp-254. 289–301 (GSAPDIAGQGKAN) provides a ligand contact to NAD(+).

It belongs to the isocitrate and isopropylmalate dehydrogenases family. LeuB type 1 subfamily. In terms of assembly, homodimer. It depends on Mg(2+) as a cofactor. Requires Mn(2+) as cofactor.

The protein resides in the cytoplasm. The catalysed reaction is (2R,3S)-3-isopropylmalate + NAD(+) = 4-methyl-2-oxopentanoate + CO2 + NADH. It participates in amino-acid biosynthesis; L-leucine biosynthesis; L-leucine from 3-methyl-2-oxobutanoate: step 3/4. In terms of biological role, catalyzes the oxidation of 3-carboxy-2-hydroxy-4-methylpentanoate (3-isopropylmalate) to 3-carboxy-4-methyl-2-oxopentanoate. The product decarboxylates to 4-methyl-2 oxopentanoate. This Cereibacter sphaeroides (strain ATCC 17023 / DSM 158 / JCM 6121 / CCUG 31486 / LMG 2827 / NBRC 12203 / NCIMB 8253 / ATH 2.4.1.) (Rhodobacter sphaeroides) protein is 3-isopropylmalate dehydrogenase.